The following is a 297-amino-acid chain: N-acetylmuramic acid 6-phosphate etherase (297 aa).

In terms of domain architecture, SIS spans 55 to 218; it reads AAAALTRGGR…STGAMVKCGK (164 aa). The active-site Proton donor is Glu-83. Glu-114 is a catalytic residue.

Belongs to the GCKR-like family. MurNAc-6-P etherase subfamily. As to quaternary structure, homodimer.

The enzyme catalyses N-acetyl-D-muramate 6-phosphate + H2O = N-acetyl-D-glucosamine 6-phosphate + (R)-lactate. It participates in amino-sugar metabolism; 1,6-anhydro-N-acetylmuramate degradation. Its pathway is amino-sugar metabolism; N-acetylmuramate degradation. The protein operates within cell wall biogenesis; peptidoglycan recycling. Specifically catalyzes the cleavage of the D-lactyl ether substituent of MurNAc 6-phosphate, producing GlcNAc 6-phosphate and D-lactate. Together with AnmK, is also required for the utilization of anhydro-N-acetylmuramic acid (anhMurNAc) either imported from the medium or derived from its own cell wall murein, and thus plays a role in cell wall recycling. The chain is N-acetylmuramic acid 6-phosphate etherase from Cronobacter sakazakii (strain ATCC BAA-894) (Enterobacter sakazakii).